A 502-amino-acid polypeptide reads, in one-letter code: Glycerol kinase (502 aa).

Thr-14 serves as a coordination point for ADP. Residues Thr-14, Thr-15, and Ser-16 each coordinate ATP. A sn-glycerol 3-phosphate-binding site is contributed by Thr-14. Residue Arg-18 coordinates ADP. Residues Arg-84, Glu-85, Tyr-136, and Asp-246 each coordinate sn-glycerol 3-phosphate. 5 residues coordinate glycerol: Arg-84, Glu-85, Tyr-136, Asp-246, and Gln-247. Thr-268 and Gly-311 together coordinate ADP. ATP contacts are provided by Thr-268, Gly-311, Gln-315, and Gly-412. ADP is bound by residues Gly-412 and Asn-416.

The protein belongs to the FGGY kinase family. In terms of assembly, homotetramer and homodimer (in equilibrium). Heterodimer with EIIA-Glc. Binds 1 zinc ion per glycerol kinase EIIA-Glc dimer. The zinc ion is important for dimerization.

It carries out the reaction glycerol + ATP = sn-glycerol 3-phosphate + ADP + H(+). It functions in the pathway polyol metabolism; glycerol degradation via glycerol kinase pathway; sn-glycerol 3-phosphate from glycerol: step 1/1. Its activity is regulated as follows. Activity of this regulatory enzyme is affected by several metabolites. Allosterically and non-competitively inhibited by fructose 1,6-bisphosphate (FBP) and unphosphorylated phosphocarrier protein EIIA-Glc (III-Glc), an integral component of the bacterial phosphotransferase (PTS) system. Functionally, key enzyme in the regulation of glycerol uptake and metabolism. Catalyzes the phosphorylation of glycerol to yield sn-glycerol 3-phosphate. The protein is Glycerol kinase of Escherichia coli O127:H6 (strain E2348/69 / EPEC).